The sequence spans 30 residues: uncharacterized protein (30 aa).

This is an uncharacterized protein from Saccharomyces cerevisiae (strain ATCC 204508 / S288c) (Baker's yeast).